The primary structure comprises 89 residues: RNA-binding protein Hfq (89 aa).

One can recognise a Sm domain in the interval 9–68 (EPFLNALRKEKVPVSIYLVNGIKLQGQIESFDQFVILLRNNVNQMVYKHAISTVVPARNV). A disordered region spans residues 70–89 (TAPPVPTETHAQSSEEFGNI). Positions 78-89 (THAQSSEEFGNI) are enriched in polar residues.

This sequence belongs to the Hfq family. As to quaternary structure, homohexamer.

Its function is as follows. RNA chaperone that binds small regulatory RNA (sRNAs) and mRNAs to facilitate mRNA translational regulation in response to envelope stress, environmental stress and changes in metabolite concentrations. Also binds with high specificity to tRNAs. This Alkalilimnicola ehrlichii (strain ATCC BAA-1101 / DSM 17681 / MLHE-1) protein is RNA-binding protein Hfq.